A 746-amino-acid polypeptide reads, in one-letter code: Ring assembly protein 3 (746 aa).

Its subcellular location is the cytoplasm. Functionally, essential for actinomyosin ring assembly during cytokinesis. Has a role, in conjunction with F-actin, in assembling myosin II-containing proteins, such as myo2, at the division site. The chain is Ring assembly protein 3 (rng3) from Schizosaccharomyces pombe (strain 972 / ATCC 24843) (Fission yeast).